Consider the following 563-residue polypeptide: 2-isopropylmalate synthase (563 aa).

The region spanning 31–305 (PIWMSTDLRD…DPGLDFAQIN (275 aa)) is the Pyruvate carboxyltransferase domain. The Mg(2+) site is built by aspartate 40, histidine 244, histidine 246, and asparagine 280. The regulatory domain stretch occupies residues 437 to 563 (RAEPIEYLSH…EWARLCGGAE (127 aa)).

Belongs to the alpha-IPM synthase/homocitrate synthase family. LeuA type 2 subfamily. In terms of assembly, homodimer. It depends on Mg(2+) as a cofactor.

Its subcellular location is the cytoplasm. It catalyses the reaction 3-methyl-2-oxobutanoate + acetyl-CoA + H2O = (2S)-2-isopropylmalate + CoA + H(+). It functions in the pathway amino-acid biosynthesis; L-leucine biosynthesis; L-leucine from 3-methyl-2-oxobutanoate: step 1/4. In terms of biological role, catalyzes the condensation of the acetyl group of acetyl-CoA with 3-methyl-2-oxobutanoate (2-ketoisovalerate) to form 3-carboxy-3-hydroxy-4-methylpentanoate (2-isopropylmalate). The protein is 2-isopropylmalate synthase of Parvibaculum lavamentivorans (strain DS-1 / DSM 13023 / NCIMB 13966).